Consider the following 262-residue polypeptide: Malonyl-[acyl-carrier protein] O-methyltransferase (262 aa).

It belongs to the methyltransferase superfamily.

It carries out the reaction malonyl-[ACP] + S-adenosyl-L-methionine = malonyl-[ACP] methyl ester + S-adenosyl-L-homocysteine. It participates in cofactor biosynthesis; biotin biosynthesis. Functionally, converts the free carboxyl group of a malonyl-thioester to its methyl ester by transfer of a methyl group from S-adenosyl-L-methionine (SAM). It allows to synthesize pimeloyl-ACP via the fatty acid synthetic pathway. This chain is Malonyl-[acyl-carrier protein] O-methyltransferase, found in Dechloromonas aromatica (strain RCB).